The primary structure comprises 430 residues: Enolase (430 aa).

Gln-167 provides a ligand contact to (2R)-2-phosphoglycerate. Residue Glu-209 is the Proton donor of the active site. Mg(2+)-binding residues include Asp-245, Glu-286, and Asp-313. Residues Lys-338, Arg-367, Ser-368, and Lys-389 each contribute to the (2R)-2-phosphoglycerate site. The Proton acceptor role is filled by Lys-338.

It belongs to the enolase family. The cofactor is Mg(2+).

The protein resides in the cytoplasm. The protein localises to the secreted. Its subcellular location is the cell surface. It carries out the reaction (2R)-2-phosphoglycerate = phosphoenolpyruvate + H2O. It functions in the pathway carbohydrate degradation; glycolysis; pyruvate from D-glyceraldehyde 3-phosphate: step 4/5. Catalyzes the reversible conversion of 2-phosphoglycerate (2-PG) into phosphoenolpyruvate (PEP). It is essential for the degradation of carbohydrates via glycolysis. This chain is Enolase, found in Synechococcus sp. (strain WH7803).